Here is a 492-residue protein sequence, read N- to C-terminus: Bifunctional purine biosynthesis protein PurH (492 aa).

The region spanning 1-144 is the MGS-like domain; that stretch reads MKKAILSVSN…KNFKHVTTIV (144 aa).

The protein belongs to the PurH family.

It catalyses the reaction (6R)-10-formyltetrahydrofolate + 5-amino-1-(5-phospho-beta-D-ribosyl)imidazole-4-carboxamide = 5-formamido-1-(5-phospho-D-ribosyl)imidazole-4-carboxamide + (6S)-5,6,7,8-tetrahydrofolate. The enzyme catalyses IMP + H2O = 5-formamido-1-(5-phospho-D-ribosyl)imidazole-4-carboxamide. Its pathway is purine metabolism; IMP biosynthesis via de novo pathway; 5-formamido-1-(5-phospho-D-ribosyl)imidazole-4-carboxamide from 5-amino-1-(5-phospho-D-ribosyl)imidazole-4-carboxamide (10-formyl THF route): step 1/1. It functions in the pathway purine metabolism; IMP biosynthesis via de novo pathway; IMP from 5-formamido-1-(5-phospho-D-ribosyl)imidazole-4-carboxamide: step 1/1. The sequence is that of Bifunctional purine biosynthesis protein PurH from Staphylococcus haemolyticus (strain JCSC1435).